The following is a 407-amino-acid chain: Guanine nucleotide-binding protein alpha-1 subunit (407 aa).

Residue Gly-2 is the site of N-myristoyl glycine attachment. A lipid anchor (S-palmitoyl cysteine) is attached at Cys-3. A G-alpha domain is found at 73-407 (NDIKVLLLGA…MSNNLQSLMF (335 aa)). The interval 76–89 (KVLLLGAGDSGKTT) is G1 motif. 14 residues coordinate GTP: Asp-84, Ser-85, Gly-86, Lys-87, Thr-88, Thr-89, Asp-190, Leu-215, Thr-221, Gly-243, Asn-309, Lys-310, Asp-312, and Ala-380. Residue Thr-88 participates in Mg(2+) binding. A G2 motif region spans residues 213 to 221 (DILHCRIKT). Thr-221 provides a ligand contact to Mg(2+). The interval 236–245 (YRFFDVGGQR) is G3 motif. Residues 305–312 (ILFLNKLD) are G4 motif. Residues 378 to 383 (TTATDT) are G5 motif.

The protein belongs to the G-alpha family. G(q) subfamily. As to quaternary structure, g proteins are composed of 3 units; alpha, beta and gamma. The alpha chain contains the guanine nucleotide binding site. Mg(2+) serves as cofactor.

In terms of biological role, implicated in the mating and sporulation pathway. Probably coupled to mating-factor receptors. May act in concert with Ras1. This chain is Guanine nucleotide-binding protein alpha-1 subunit (gpa1), found in Schizosaccharomyces pombe (strain 972 / ATCC 24843) (Fission yeast).